The chain runs to 163 residues: NADH-quinone oxidoreductase subunit I (163 aa).

2 4Fe-4S ferredoxin-type domains span residues 53–83 (LRRY…IEAG) and 94–123 (VRYD…EGPN). [4Fe-4S] cluster contacts are provided by cysteine 63, cysteine 66, cysteine 69, cysteine 73, cysteine 103, cysteine 106, cysteine 109, and cysteine 113.

Belongs to the complex I 23 kDa subunit family. NDH-1 is composed of 14 different subunits. Subunits NuoA, H, J, K, L, M, N constitute the membrane sector of the complex. [4Fe-4S] cluster serves as cofactor.

The protein resides in the cell inner membrane. It carries out the reaction a quinone + NADH + 5 H(+)(in) = a quinol + NAD(+) + 4 H(+)(out). Functionally, NDH-1 shuttles electrons from NADH, via FMN and iron-sulfur (Fe-S) centers, to quinones in the respiratory chain. The immediate electron acceptor for the enzyme in this species is believed to be ubiquinone. Couples the redox reaction to proton translocation (for every two electrons transferred, four hydrogen ions are translocated across the cytoplasmic membrane), and thus conserves the redox energy in a proton gradient. In Brucella abortus (strain S19), this protein is NADH-quinone oxidoreductase subunit I.